The sequence spans 687 residues: Glycine--tRNA ligase beta subunit (687 aa).

Belongs to the class-II aminoacyl-tRNA synthetase family. In terms of assembly, tetramer of two alpha and two beta subunits.

Its subcellular location is the cytoplasm. It catalyses the reaction tRNA(Gly) + glycine + ATP = glycyl-tRNA(Gly) + AMP + diphosphate. The chain is Glycine--tRNA ligase beta subunit from Geobacter sp. (strain M21).